The sequence spans 348 residues: Protein pelota homolog (348 aa).

Belongs to the eukaryotic release factor 1 family. Pelota subfamily. As to quaternary structure, monomer. A divalent metal cation is required as a cofactor.

It is found in the cytoplasm. Its function is as follows. May function in recognizing stalled ribosomes, interact with stem-loop structures in stalled mRNA molecules, and effect endonucleolytic cleavage of the mRNA. May play a role in the release non-functional ribosomes and degradation of damaged mRNAs. Has endoribonuclease activity. The sequence is that of Protein pelota homolog from Methanococcus maripaludis (strain C5 / ATCC BAA-1333).